Consider the following 526-residue polypeptide: Alpha-ketoglutaric semialdehyde dehydrogenase (526 aa).

NADP(+)-binding positions include 159–160, 185–188, and 240–241; these read SN, KAHS, and GS. Glu264 serves as the catalytic Proton acceptor. The active-site Nucleophile is the Cys301. Residue Glu393 coordinates NADP(+).

It belongs to the aldehyde dehydrogenase family.

It carries out the reaction 2,5-dioxopentanoate + NADP(+) + H2O = 2-oxoglutarate + NADPH + 2 H(+). The protein operates within carbohydrate acid metabolism; D-glucarate degradation. Functionally, catalyzes the NAD(P)(+)-dependent oxidation of alpha-ketoglutaric semialdehyde (alphaKGSA) to alpha-ketoglutarate in the D-glutarate degradation pathway. This Acinetobacter baylyi (strain ATCC 33305 / BD413 / ADP1) protein is Alpha-ketoglutaric semialdehyde dehydrogenase.